Here is a 486-residue protein sequence, read N- to C-terminus: ATP synthase subunit beta (486 aa).

An ATP-binding site is contributed by 167–174 (GGAGVGKT).

The protein belongs to the ATPase alpha/beta chains family. F-type ATPases have 2 components, CF(1) - the catalytic core - and CF(0) - the membrane proton channel. CF(1) has five subunits: alpha(3), beta(3), gamma(1), delta(1), epsilon(1). CF(0) has three main subunits: a(1), b(2) and c(9-12). The alpha and beta chains form an alternating ring which encloses part of the gamma chain. CF(1) is attached to CF(0) by a central stalk formed by the gamma and epsilon chains, while a peripheral stalk is formed by the delta and b chains.

The protein localises to the cell inner membrane. It catalyses the reaction ATP + H2O + 4 H(+)(in) = ADP + phosphate + 5 H(+)(out). In terms of biological role, produces ATP from ADP in the presence of a proton gradient across the membrane. The catalytic sites are hosted primarily by the beta subunits. The chain is ATP synthase subunit beta from Anaplasma marginale (strain St. Maries).